Here is an 80-residue protein sequence, read N- to C-terminus: uncharacterized protein (80 aa).

This is an uncharacterized protein from Schizosaccharomyces pombe (strain 972 / ATCC 24843) (Fission yeast).